The following is a 498-amino-acid chain: Lysine--tRNA ligase (498 aa).

Residues Glu-409 and Glu-416 each contribute to the Mg(2+) site.

It belongs to the class-II aminoacyl-tRNA synthetase family. As to quaternary structure, homodimer. Mg(2+) is required as a cofactor.

Its subcellular location is the cytoplasm. The catalysed reaction is tRNA(Lys) + L-lysine + ATP = L-lysyl-tRNA(Lys) + AMP + diphosphate. The chain is Lysine--tRNA ligase from Teredinibacter turnerae (strain ATCC 39867 / T7901).